The following is a 281-amino-acid chain: 4-diphosphocytidyl-2-C-methyl-D-erythritol kinase (281 aa).

Residues K11 and D138 contribute to the active site.

It belongs to the GHMP kinase family. IspE subfamily.

It carries out the reaction 4-CDP-2-C-methyl-D-erythritol + ATP = 4-CDP-2-C-methyl-D-erythritol 2-phosphate + ADP + H(+). It functions in the pathway isoprenoid biosynthesis; isopentenyl diphosphate biosynthesis via DXP pathway; isopentenyl diphosphate from 1-deoxy-D-xylulose 5-phosphate: step 3/6. In terms of biological role, catalyzes the phosphorylation of the position 2 hydroxy group of 4-diphosphocytidyl-2C-methyl-D-erythritol. In Pelagibacter ubique (strain HTCC1062), this protein is 4-diphosphocytidyl-2-C-methyl-D-erythritol kinase.